Reading from the N-terminus, the 1534-residue chain is Dicer-like protein 1 (1534 aa).

Positions 36–70 (PSAEPGVEHDQISPGESDEEIEENISDQNNSSSQK) are disordered. Over residues 51-60 (ESDEEIEENI) the composition is skewed to acidic residues. The Helicase ATP-binding domain maps to 130–311 (LFERAKAQNT…AAATRLETLL (182 aa)). ATP is bound at residue 143–150 (LDTGSGKT). A DEAH box motif is present at residues 256-259 (DEAH). The Helicase C-terminal domain occupies 456–613 (ELSKHFSHAP…FCETLPEDRI (158 aa)). The region spanning 648–738 (AIAILARYAS…KSIYHKRLPA (91 aa)) is the Dicer dsRNA-binding fold domain. One can recognise a PAZ domain in the interval 888–1016 (KTVTFVQEND…ICAEPLKISA (129 aa)). 2 consecutive RNase III domains span residues 1054 to 1199 (SDYA…LSGG) and 1250 to 1402 (ALQV…VDSD). Mg(2+) is bound by residues Glu-1291, Asp-1388, and Glu-1391. Residues 1436-1504 (TFLHNRLANE…SERALVVLDG (69 aa)) form the DRBM domain. Zn(2+) is bound by residues Cys-1448, His-1475, Cys-1516, and Cys-1518.

This sequence belongs to the helicase family. Dicer subfamily. Mg(2+) serves as cofactor. Mn(2+) is required as a cofactor.

Its function is as follows. Dicer-like endonuclease involved in cleaving double-stranded RNA in the RNA interference (RNAi) pathway. Produces 21 to 25 bp dsRNAs (siRNAs) which target the selective destruction of homologous RNAs leading to sequence-specific suppression of gene expression, called post-transcriptional gene silencing (PTGS). Part of a broad host defense response against viral infection and transposons. This chain is Dicer-like protein 1 (dcl1), found in Aspergillus clavatus (strain ATCC 1007 / CBS 513.65 / DSM 816 / NCTC 3887 / NRRL 1 / QM 1276 / 107).